The chain runs to 485 residues: NADH-quinone oxidoreductase subunit N (485 aa).

A run of 14 helical transmembrane segments spans residues 8–28, 35–55, 71–91, 105–125, 127–147, 159–179, 203–223, 235–255, 271–291, 297–317, 326–346, 373–393, 408–430, and 455–475; these read LIALLPLLIVGLTVVVVMLSI, FLNATLSVIGLNAALVSLWFV, GFAMLYTGLVLLASLATCTFA, FYLLVLIAALGGILLANANHL, SLFLGIELISLPLFGLVGYAF, YTILSAAASSFLLFGMALVYA, LLAGFGMMIVGLGFKLSLVPF, PAPVSTFLATASKIAIFGVVM, VVLAIIAFASIIFGNLMALSQ, LLGYSSISHLGYLLVALIALQ, VGVYLAGYLFSSLGAFGVVSL, AAVMTVMMLSLAGIPMTLGFI, WWLVGAVVVGSAIGLYYYLRVAV, and IVVLISALLVLVLGVWPQPLI.

The protein belongs to the complex I subunit 2 family. In terms of assembly, NDH-1 is composed of 13 different subunits. Subunits NuoA, H, J, K, L, M, N constitute the membrane sector of the complex.

Its subcellular location is the cell inner membrane. The catalysed reaction is a quinone + NADH + 5 H(+)(in) = a quinol + NAD(+) + 4 H(+)(out). In terms of biological role, NDH-1 shuttles electrons from NADH, via FMN and iron-sulfur (Fe-S) centers, to quinones in the respiratory chain. The immediate electron acceptor for the enzyme in this species is believed to be ubiquinone. Couples the redox reaction to proton translocation (for every two electrons transferred, four hydrogen ions are translocated across the cytoplasmic membrane), and thus conserves the redox energy in a proton gradient. This is NADH-quinone oxidoreductase subunit N from Shigella flexneri.